The following is a 248-amino-acid chain: Type III pantothenate kinase (248 aa).

An ATP-binding site is contributed by 6-13; that stretch reads DCGNSLIK. Residues Tyr92 and 99-102 contribute to the substrate site; that span reads GLDR. Asp101 functions as the Proton acceptor in the catalytic mechanism. A K(+)-binding site is contributed by Asp121. Thr124 contacts ATP. Thr180 is a binding site for substrate.

Belongs to the type III pantothenate kinase family. Homodimer. The cofactor is NH4(+). K(+) is required as a cofactor.

Its subcellular location is the cytoplasm. It catalyses the reaction (R)-pantothenate + ATP = (R)-4'-phosphopantothenate + ADP + H(+). It functions in the pathway cofactor biosynthesis; coenzyme A biosynthesis; CoA from (R)-pantothenate: step 1/5. Its function is as follows. Catalyzes the phosphorylation of pantothenate (Pan), the first step in CoA biosynthesis. In Pseudomonas aeruginosa (strain LESB58), this protein is Type III pantothenate kinase.